Reading from the N-terminus, the 215-residue chain is Ras-related protein Rab-5A (215 aa).

10 residues coordinate GTP: Ser-29, Ala-30, Gly-32, Lys-33, Ser-34, Ser-35, His-46, Glu-47, Thr-52, and Gly-78. Ser-34 contacts Mg(2+). 2 consecutive short sequence motifs (switch) follow at residues 44–56 and 77–93; these read QFHE…IGAA and AGQE…YRGA. Residue Thr-52 coordinates Mg(2+). Ser-84 carries the post-translational modification Phosphoserine; by LRRK2. Arg-120 carries a (Microbial infection) N-beta-linked (GlcNAc) arginine glycan. The GTP site is built by Asn-133, Lys-134, Asp-136, Ala-164, and Lys-165. The tract at residues 181–215 is disordered; sequence LPKNEPQNPGANSARGRGVDLTEPTQPTRNQCCSN. Positions 203 to 215 are enriched in polar residues; it reads EPTQPTRNQCCSN. 2 S-geranylgeranyl cysteine lipidation sites follow: Cys-212 and Cys-213.

It belongs to the small GTPase superfamily. Rab family. In terms of assembly, interacts with SGSM1 and SGSM3. Interacts with PIK3CB. Interacts with GDI1; this promotes dissociation from membranes; phosphorylation at Ser-84 disrupts this interaction. Interacts with GDI2; phosphorylation at Ser-84 disrupts the interaction. Interacts with EEA1. Interacts with RIN1 and GAPVD1, which regulate its pathway, probably by acting as a GEF. Interacts with RINL. Interacts with ALS2CL, SUN2, ZFYVE20 and RUFY1. Interacts with RABEP1; one RABEP1 homodimer binds two RAB5A chains, but at opposite sides of the dimer. Interacts with OCRL. Interacts with INPP5F. May be a component of a complex composed of RAB5A, DYN2 and PIK3C3. Does not interact with BLOC-3 complex (heterodimer of HPS1 and HPS4). Interacts with CLN5. Interacts with APPL2. Interacts with F8A1/F8A2/F8A3. Found in a complex with F8A1/F8A2/F8A3, HTT and RAB5A; mediates the recruitment of HTT by RAB5A onto early endosomes. Interacts with ATP9A. Interacts with PPP1R21; mediates the recruitment of FERRY complex by RAB5A onto early endosomes. Mg(2+) serves as cofactor. In terms of processing, phosphorylation of Ser-84 in the switch II region by LRRK2 prevents the association of RAB regulatory proteins, including RAB GDP dissociation inhibitors GDI1 and GDI2. Post-translationally, (Microbial infection) Glycosylated on arginine residues by S.typhimurium protein Ssek3.

It is found in the cell membrane. Its subcellular location is the early endosome membrane. The protein resides in the melanosome. It localises to the cytoplasmic vesicle. The protein localises to the cell projection. It is found in the ruffle. Its subcellular location is the membrane. The protein resides in the cytoplasm. It localises to the cytosol. The protein localises to the phagosome membrane. It is found in the endosome membrane. The catalysed reaction is GTP + H2O = GDP + phosphate + H(+). Regulated by guanine nucleotide exchange factors (GEFs) including RINL, which promote the exchange of bound GDP for free GTP. Regulated by GTPase activating proteins (GAPs) which increase the GTP hydrolysis activity. Inhibited by GDP dissociation inhibitors (GDIs). In terms of biological role, the small GTPases Rab are key regulators of intracellular membrane trafficking, from the formation of transport vesicles to their fusion with membranes. Rabs cycle between an inactive GDP-bound form and an active GTP-bound form that is able to recruit to membranes different sets of downstream effectors directly responsible for vesicle formation, movement, tethering and fusion. RAB5A is required for the fusion of plasma membranes and early endosomes. Contributes to the regulation of filopodia extension. Required for the exosomal release of SDCBP, CD63, PDCD6IP and syndecan. Regulates maturation of apoptotic cell-containing phagosomes, probably downstream of DYN2 and PIK3C3. This chain is Ras-related protein Rab-5A, found in Homo sapiens (Human).